The primary structure comprises 514 residues: Maturase K (514 aa).

Belongs to the intron maturase 2 family. MatK subfamily.

The protein resides in the plastid. It is found in the chloroplast. Usually encoded in the trnK tRNA gene intron. Probably assists in splicing its own and other chloroplast group II introns. This Dioon spinulosum (Gum palm) protein is Maturase K.